A 511-amino-acid polypeptide reads, in one-letter code: MDEDNLETALQTYRAQLQQVELALGAGLDASEQADLRQLQGDLKELIELTEASLLSVRKSKLLSTVDQESPAQEDAEYLAFQKAIAEEVEAPGAPCNDSETAPGSEVQPGSTSSALEEEEEDPDLEELSGAKVNAPYYSAWGTLEYHNAMVVGAEEAEDGSACVRVLYLYPTHKSLKPCPFFLEGKCRFKENCRFSHGQVVSVDELRPFQDPDLSLLQTGSACLAKHQDGLWHPARITDVDNGYYTVKFDSLLLKEAVVEGDSILPPLRTEATESSDSDTGDASDSSYARVVEPSTVDTGTCSSAFAGWEVHTRGIGSKLLVKMGYEFGKGLGRHAEGRVEPIHAVVLPRGKSLDQCAEILQKKTKRGQAGSNRPPKCRRSGSRPEGRPPPRNVFDFLNEKLQSQVPGTPDAGVDTPERRNKDMYHASKSAKQALSLQLFQTEEKIERTQRDIRGIQEALTRNTGRHNMTTAHLQEKLEGAQRQLGQLRAQEADLQRKQRKADTHRKMTEF.

Position 1 is an N-acetylmethionine (M1). Phosphoserine is present on S70. The segment at 92–129 (PGAPCNDSETAPGSEVQPGSTSSALEEEEEDPDLEELS) is disordered. Positions 98–115 (DSETAPGSEVQPGSTSSA) are enriched in polar residues. A compositionally biased stretch (acidic residues) spans 116 to 127 (LEEEEEDPDLEE). The C3H1-type zinc-finger motif lies at 174 to 200 (KSLKPCPFFLEGKCRFKENCRFSHGQV). A disordered region spans residues 266–291 (PPLRTEATESSDSDTGDASDSSYARV). S276 is modified (phosphoserine). A Phosphothreonine modification is found at T280. In terms of domain architecture, G-patch spans 313-359 (TRGIGSKLLVKMGYEFGKGLGRHAEGRVEPIHAVVLPRGKSLDQCAE). S353 is modified (phosphoserine). Disordered regions lie at residues 363 to 393 (KKTK…PPRN) and 490 to 511 (AQEA…MTEF). Positions 491-511 (QEADLQRKQRKADTHRKMTEF) are enriched in basic and acidic residues.

In terms of assembly, interacts with CHD4/Mi-2; the interaction is direct.

It is found in the nucleus. Transcription repressor that specifically binds the 5'-GGAG[GA]A[GA]A-3' consensus sequence. Represses transcription by recruiting the chromatin multiprotein complex NuRD to target promoters. Negatively regulates expression of EGFR, a gene involved in cell proliferation, survival and migration. Its ability to repress genes of the EGFR pathway suggest it may act as a tumor suppressor. This chain is Zinc finger CCCH-type with G patch domain-containing protein (Zgpat), found in Mus musculus (Mouse).